A 337-amino-acid polypeptide reads, in one-letter code: Glycerol-3-phosphate dehydrogenase [NAD(P)+] (337 aa).

Residues W11, R30, and K102 each contribute to the NADPH site. Residues K102, G138, and S140 each coordinate sn-glycerol 3-phosphate. A142 is an NADPH binding site. Residues K193, D246, S256, R257, and N258 each contribute to the sn-glycerol 3-phosphate site. K193 (proton acceptor) is an active-site residue. R257 lines the NADPH pocket. Residues V281 and E283 each coordinate NADPH.

It belongs to the NAD-dependent glycerol-3-phosphate dehydrogenase family.

Its subcellular location is the cytoplasm. The enzyme catalyses sn-glycerol 3-phosphate + NAD(+) = dihydroxyacetone phosphate + NADH + H(+). It catalyses the reaction sn-glycerol 3-phosphate + NADP(+) = dihydroxyacetone phosphate + NADPH + H(+). It participates in membrane lipid metabolism; glycerophospholipid metabolism. Functionally, catalyzes the reduction of the glycolytic intermediate dihydroxyacetone phosphate (DHAP) to sn-glycerol 3-phosphate (G3P), the key precursor for phospholipid synthesis. The sequence is that of Glycerol-3-phosphate dehydrogenase [NAD(P)+] from Variovorax paradoxus (strain S110).